We begin with the raw amino-acid sequence, 91 residues long: Putative transmembrane protein encoded by LINC00862 (91 aa).

Residues 49–69 (IMALILMPSLHCFGNILILLF) form a helical membrane-spanning segment.

The protein resides in the membrane. The protein is Putative transmembrane protein encoded by LINC00862 (LINC00862) of Homo sapiens (Human).